We begin with the raw amino-acid sequence, 353 residues long: Histidinol-phosphate aminotransferase (353 aa).

The residue at position 211 (K211) is an N6-(pyridoxal phosphate)lysine.

It belongs to the class-II pyridoxal-phosphate-dependent aminotransferase family. Histidinol-phosphate aminotransferase subfamily. Homodimer. The cofactor is pyridoxal 5'-phosphate.

It catalyses the reaction L-histidinol phosphate + 2-oxoglutarate = 3-(imidazol-4-yl)-2-oxopropyl phosphate + L-glutamate. The protein operates within amino-acid biosynthesis; L-histidine biosynthesis; L-histidine from 5-phospho-alpha-D-ribose 1-diphosphate: step 7/9. This chain is Histidinol-phosphate aminotransferase, found in Klebsiella pneumoniae subsp. pneumoniae (strain ATCC 700721 / MGH 78578).